The following is an 89-amino-acid chain: Small ribosomal subunit protein uS17 (89 aa).

It belongs to the universal ribosomal protein uS17 family. As to quaternary structure, part of the 30S ribosomal subunit.

In terms of biological role, one of the primary rRNA binding proteins, it binds specifically to the 5'-end of 16S ribosomal RNA. The polypeptide is Small ribosomal subunit protein uS17 (Lactiplantibacillus plantarum (strain ATCC BAA-793 / NCIMB 8826 / WCFS1) (Lactobacillus plantarum)).